The following is a 465-amino-acid chain: Monocarboxylate transporter 4 (465 aa).

Over 2-17 the chain is Cytoplasmic; it reads GGAVVDEGPTGVKAPD. A helical membrane pass occupies residues 18-38; it reads GGWGWAVLFGCFVITGFSYAF. Residues 39–61 lie on the Extracellular side of the membrane; the sequence is PKAVSVFFKELIQEFGIGYSDTA. A helical transmembrane segment spans residues 62–82; the sequence is WISSILLAMLYGTGPLCSVCV. The Cytoplasmic portion of the chain corresponds to 83 to 84; the sequence is NR. Residues 85–105 traverse the membrane as a helical segment; that stretch reads FGCRPVMLVGGLFASLGMVAA. Over 106–109 the chain is Extracellular; it reads SFCR. A helical transmembrane segment spans residues 110-130; the sequence is SIIQVYLTTGVITGLGLALNF. Topologically, residues 131–149 are cytoplasmic; the sequence is QPSLIMLNRYFSKRRPMAN. Residues 150 to 170 traverse the membrane as a helical segment; it reads GLAAAGSPVFLCALSPLGQLL. Over 171–179 the chain is Extracellular; it reads QDRYGWRGG. The chain crosses the membrane as a helical span at residues 180 to 200; it reads FLILGGLLLNCCVCAALMRPL. The Cytoplasmic portion of the chain corresponds to 201–227; that stretch reads VVTAQPGSGPPRPSRRLLDLSVFRDRG. The chain crosses the membrane as a helical span at residues 228–248; that stretch reads FVLYAVAASVMVLGLFVPPVF. Residues 249–264 are Extracellular-facing; sequence VVSYAKDLGVPDTKAA. A helical membrane pass occupies residues 265-285; sequence FLLTILGFIDIFARPAAGFVA. Over 286 to 294 the chain is Cytoplasmic; the sequence is GLGKVRPYS. The helical transmembrane segment at 295–315 threads the bilayer; it reads VYLFSFSMFFNGLADLAGSTA. Residues 316 to 317 are Extracellular-facing; that stretch reads GD. Residues 318–338 traverse the membrane as a helical segment; sequence YGGLVVFCIFFGISYGMVGAL. Over 339 to 351 the chain is Cytoplasmic; the sequence is QFEVLMAIVGTHK. Residues 352-372 form a helical membrane-spanning segment; the sequence is FSSAIGLVLLMEAVAVLVGPP. Topologically, residues 373–384 are extracellular; the sequence is SGGKLLDATHVY. A helical transmembrane segment spans residues 385–405; sequence MYVFILAGAEVLTSSLILLLG. Residues 406–465 lie on the Cytoplasmic side of the membrane; that stretch reads NFFCIRKKPKEPQPEVAAAEEEKLHKPPADSGVDLREVEHFLKAEPEKNGEVVHTPETSV. Positions 419–438 are disordered; the sequence is PEVAAAEEEKLHKPPADSGV. Basolateral sorting signal stretches follow at residues 423–441 and 441–465; these read AAEE…VDLR and REVE…ETSV. Basic and acidic residues predominate over residues 425-438; the sequence is EEEKLHKPPADSGV. Ser-436 carries the post-translational modification Phosphoserine. A Phosphothreonine modification is found at Thr-460. Ser-464 bears the Phosphoserine mark.

This sequence belongs to the major facilitator superfamily. Monocarboxylate porter (TC 2.A.1.13) family. In terms of assembly, interacts with BSG; interaction mediates SLC16A3 targeting to the plasma membrane. In terms of tissue distribution, highly expressed in skeletal muscle.

It localises to the cell membrane. The protein localises to the basolateral cell membrane. It catalyses the reaction (S)-lactate(in) + H(+)(in) = (S)-lactate(out) + H(+)(out). The catalysed reaction is pyruvate(out) + H(+)(out) = pyruvate(in) + H(+)(in). Proton-dependent transporter of monocarboxylates such as L-lactate and pyruvate. Plays a predominant role in L-lactate efflux from highly glycolytic cells. This chain is Monocarboxylate transporter 4 (SLC16A3), found in Homo sapiens (Human).